A 650-amino-acid chain; its full sequence is 1-deoxy-D-xylulose-5-phosphate synthase (650 aa).

Thiamine diphosphate contacts are provided by residues histidine 73 and 113–115 (SHA). A Mg(2+)-binding site is contributed by aspartate 145. Residues 146–147 (GA), asparagine 175, tyrosine 287, and glutamate 369 contribute to the thiamine diphosphate site. Mg(2+) is bound at residue asparagine 175. The disordered stretch occupies residues 629–650 (SARPLPEDAERVPMRAEDDEQA). Residues 633-644 (LPEDAERVPMRA) are compositionally biased toward basic and acidic residues.

It belongs to the transketolase family. DXPS subfamily. In terms of assembly, homodimer. Mg(2+) is required as a cofactor. The cofactor is thiamine diphosphate.

The catalysed reaction is D-glyceraldehyde 3-phosphate + pyruvate + H(+) = 1-deoxy-D-xylulose 5-phosphate + CO2. It participates in metabolic intermediate biosynthesis; 1-deoxy-D-xylulose 5-phosphate biosynthesis; 1-deoxy-D-xylulose 5-phosphate from D-glyceraldehyde 3-phosphate and pyruvate: step 1/1. Catalyzes the acyloin condensation reaction between C atoms 2 and 3 of pyruvate and glyceraldehyde 3-phosphate to yield 1-deoxy-D-xylulose-5-phosphate (DXP). The polypeptide is 1-deoxy-D-xylulose-5-phosphate synthase (Clavibacter sepedonicus (Clavibacter michiganensis subsp. sepedonicus)).